We begin with the raw amino-acid sequence, 430 residues long: Trigger factor (430 aa).

One can recognise a PPIase FKBP-type domain in the interval 157 to 242 (GDLVALETWS…AVEVSEPVLP (86 aa)).

The protein belongs to the FKBP-type PPIase family. Tig subfamily.

It localises to the cytoplasm. The catalysed reaction is [protein]-peptidylproline (omega=180) = [protein]-peptidylproline (omega=0). Functionally, involved in protein export. Acts as a chaperone by maintaining the newly synthesized protein in an open conformation. Functions as a peptidyl-prolyl cis-trans isomerase. The sequence is that of Trigger factor from Xanthomonas oryzae pv. oryzae (strain PXO99A).